A 211-amino-acid chain; its full sequence is MDNLSSEEIQQRAHQITDESLESTRRILGLAIESQDAGIKTITMLDEQKEQLNRIEEGLDQINKDMRETEKTLTELNKCCGLCVCPCNRTKNFESGKAYKTTWGDGGENSPCNVVSKQPGPVTNGQLQQPTTGAASGGYIKRITNDAREDEMEENLTQVGSILGNLKDMALNIGNEIDAQNPQIKRITDKADTNRDRIDIANARAKKLIDS.

Methionine 1 is subject to N-acetylmethionine. Phosphoserine occurs at positions 5, 6, 20, 23, and 34. One can recognise a t-SNARE coiled-coil homology 1 domain in the interval 14 to 76; that stretch reads HQITDESLES…RETEKTLTEL (63 aa). Residues 23–76 are a coiled coil; sequence STRRILGLAIESQDAGIKTITMLDEQKEQLNRIEEGLDQINKDMRETEKTLTEL. 5 S-palmitoyl cysteine lipidation sites follow: cysteine 79, cysteine 80, cysteine 83, cysteine 85, and cysteine 87. Residue serine 110 is modified to Phosphoserine. The S-palmitoyl cysteine moiety is linked to residue cysteine 112. One can recognise a t-SNARE coiled-coil homology 2 domain in the interval 146 to 208; the sequence is DAREDEMEEN…DIANARAKKL (63 aa). Serine 161 is subject to Phosphoserine.

This sequence belongs to the SNAP-25 family. In terms of assembly, homotetramer (via coiled-coil domain), also forms heterotetramers with STX4 and VAMP3. Found in a complex with VAMP8 and STX1A. Found in a complex with VAMP8 and STX4 in pancreas. Interacts simultaneously with SNAPIN and SYN4. Interacts with STX1A. Interacts with STX12. Interacts tightly to multiple syntaxins and synaptobrevins/VAMPs. Interacts with ZDHHC13 (via ANK repeats). Interacts with ZDHHC17 (via ANK repeats). In terms of tissue distribution, ubiquitous. Highest levels where found in placenta.

Its subcellular location is the cell membrane. It localises to the synapse. It is found in the synaptosome. In terms of biological role, essential component of the high affinity receptor for the general membrane fusion machinery and an important regulator of transport vesicle docking and fusion. The polypeptide is Synaptosomal-associated protein 23 (SNAP23) (Homo sapiens (Human)).